Consider the following 847-residue polypeptide: Envelope glycoprotein gp160 (847 aa).

The signal sequence occupies residues 1 to 31; it reads MRVKGIRKNYQHLWRGGTLLLGMLMICSAVE. Topologically, residues 32–675 are extracellular; it reads KLWVTVYYGV…ISKWLWYIKI (644 aa). An intrachain disulfide couples Cys53 to Cys73. N-linked (GlcNAc...) asparagine; by host glycans are attached at residues Asn87, Asn135, Asn154, Asn186, Asn195, Asn232, Asn239, Asn260, Asn274, Asn293, Asn299, Asn329, Asn336, and Asn352. 5 disulfide bridges follow: Cys118–Cys203, Cys125–Cys194, Cys130–Cys155, Cys216–Cys245, and Cys226–Cys237. A V1 region spans residues 130–154; that stretch reads CTNLKNATNTKSSNWKEMDRGEIKN. A V2 region spans residues 155 to 194; the sequence is CSFKVTTSIRNKMQKEYALFYKLDVVPIDNDNTSYKLINC. The V3 stretch occupies residues 294 to 327; sequence CTRPNNNTRKSITIGPGRAFYATGDIIGDIRQAH. Residues Cys294 and Cys328 are joined by a disulfide bond. The segment at 360–370 is CD4-binding loop; that stretch reads SSGGDPEIVMH. Cystine bridges form between Cys374–Cys435 and Cys381–Cys408. A V4 region spans residues 381–408; that stretch reads CNSTQLFNSTWNNTIGPNNTNGTITLPC. 7 N-linked (GlcNAc...) asparagine; by host glycosylation sites follow: Asn382, Asn388, Asn392, Asn398, Asn401, Asn438, and Asn454. V5 stretches follow at residues 451–462 and 453–462; these read EISNTTEIFRPG and SNTTEIFRPG. Residues 503 to 523 are fusion peptide; that stretch reads AVTLGAMFLGFLGAAGSTMGA. The segment at 565 to 583 is immunosuppression; sequence KQLQARVLAVERYLKDQQL. Cys589 and Cys595 are oxidised to a cystine. Residues Asn602, Asn607, Asn616, and Asn628 are each glycosylated (N-linked (GlcNAc...) asparagine; by host). Residues 624-658 adopt a coiled-coil conformation; sequence REIDNYTNLIYTLIEESQNQQEKNEQELLELDKWA. Residues 653-674 form an MPER; binding to GalCer region; it reads ELDKWASLWNWFDISKWLWYIK. Residues 676-696 traverse the membrane as a helical segment; sequence FIMIVGGLVGLRIVFTVLSIV. The Cytoplasmic segment spans residues 697–847; the sequence is NRVRQGYSPL…IRQGFERALL (151 aa). The YXXL motif; contains endocytosis signal motif lies at 703–706; that stretch reads YSPL. Residues 710–736 form a disordered region; the sequence is TRFPAPRGPDRPEGIEEEGGERDRDRS. Residue Cys755 is the site of S-palmitoyl cysteine; by host attachment. A Di-leucine internalization motif motif is present at residues 846–847; the sequence is LL.

It belongs to the HIV-1 env protein family. The mature envelope protein (Env) consists of a homotrimer of non-covalently associated gp120-gp41 heterodimers. The resulting complex protrudes from the virus surface as a spike. There seems to be as few as 10 spikes on the average virion. Interacts with host CD4, CCR5 and CXCR4. Gp120 also interacts with the C-type lectins CD209/DC-SIGN and CLEC4M/DC-SIGNR (collectively referred to as DC-SIGN(R)). Gp120 and gp41 interact with GalCer. Gp120 interacts with host ITGA4/ITGB7 complex; on CD4+ T-cells, this interaction results in rapid activation of integrin ITGAL/LFA-1, which facilitates efficient cell-to-cell spreading of HIV-1. Gp120 interacts with cell-associated heparan sulfate; this interaction increases virus infectivity on permissive cells and may be involved in infection of CD4- cells. As to quaternary structure, the mature envelope protein (Env) consists of a homotrimer of non-covalently associated gp120-gp41 heterodimers. The resulting complex protrudes from the virus surface as a spike. There seems to be as few as 10 spikes on the average virion. Post-translationally, highly glycosylated by host. The high number of glycan on the protein is reffered to as 'glycan shield' because it contributes to hide protein sequence from adaptive immune system. In terms of processing, palmitoylation of the transmembrane protein and of Env polyprotein (prior to its proteolytic cleavage) is essential for their association with host cell membrane lipid rafts. Palmitoylation is therefore required for envelope trafficking to classical lipid rafts, but not for viral replication. Specific enzymatic cleavages in vivo yield mature proteins. Envelope glycoproteins are synthesized as an inactive precursor that is heavily N-glycosylated and processed likely by host cell furin in the Golgi to yield the mature SU and TM proteins. The cleavage site between SU and TM requires the minimal sequence [KR]-X-[KR]-R. About 2 of the 9 disulfide bonds of gp41 are reduced by P4HB/PDI, following binding to CD4 receptor.

The protein localises to the virion membrane. It is found in the host cell membrane. Its subcellular location is the host endosome membrane. Functionally, oligomerizes in the host endoplasmic reticulum into predominantly trimers. In a second time, gp160 transits in the host Golgi, where glycosylation is completed. The precursor is then proteolytically cleaved in the trans-Golgi and thereby activated by cellular furin or furin-like proteases to produce gp120 and gp41. Its function is as follows. Attaches the virus to the host lymphoid cell by binding to the primary receptor CD4. This interaction induces a structural rearrangement creating a high affinity binding site for a chemokine coreceptor like CXCR4 and/or CCR5. Acts as a ligand for CD209/DC-SIGN and CLEC4M/DC-SIGNR, which are respectively found on dendritic cells (DCs), and on endothelial cells of liver sinusoids and lymph node sinuses. These interactions allow capture of viral particles at mucosal surfaces by these cells and subsequent transmission to permissive cells. HIV subverts the migration properties of dendritic cells to gain access to CD4+ T-cells in lymph nodes. Virus transmission to permissive T-cells occurs either in trans (without DCs infection, through viral capture and transmission), or in cis (following DCs productive infection, through the usual CD4-gp120 interaction), thereby inducing a robust infection. In trans infection, bound virions remain infectious over days and it is proposed that they are not degraded, but protected in non-lysosomal acidic organelles within the DCs close to the cell membrane thus contributing to the viral infectious potential during DCs' migration from the periphery to the lymphoid tissues. On arrival at lymphoid tissues, intact virions recycle back to DCs' cell surface allowing virus transmission to CD4+ T-cells. Acts as a class I viral fusion protein. Under the current model, the protein has at least 3 conformational states: pre-fusion native state, pre-hairpin intermediate state, and post-fusion hairpin state. During fusion of viral and target intracellular membranes, the coiled coil regions (heptad repeats) assume a trimer-of-hairpins structure, positioning the fusion peptide in close proximity to the C-terminal region of the ectodomain. The formation of this structure appears to drive apposition and subsequent fusion of viral and target cell membranes. Complete fusion occurs in host cell endosomes and is dynamin-dependent, however some lipid transfer might occur at the plasma membrane. The virus undergoes clathrin-dependent internalization long before endosomal fusion, thus minimizing the surface exposure of conserved viral epitopes during fusion and reducing the efficacy of inhibitors targeting these epitopes. Membranes fusion leads to delivery of the nucleocapsid into the cytoplasm. The sequence is that of Envelope glycoprotein gp160 from Human immunodeficiency virus type 1 group M subtype B (isolate SF162) (HIV-1).